A 339-amino-acid polypeptide reads, in one-letter code: DNA-directed RNA polymerase subunit alpha (339 aa).

The alpha N-terminal domain (alpha-NTD) stretch occupies residues 1-233; the sequence is MVREEVAGST…DLFLPFLHAE (233 aa). Residues 264 to 339 form an alpha C-terminal domain (alpha-CTD) region; that stretch reads KKGIPLNCIF…IDLLKNKLSF (76 aa).

The protein belongs to the RNA polymerase alpha chain family. In plastids the minimal PEP RNA polymerase catalytic core is composed of four subunits: alpha, beta, beta', and beta''. When a (nuclear-encoded) sigma factor is associated with the core the holoenzyme is formed, which can initiate transcription.

The protein localises to the plastid. It localises to the chloroplast. It carries out the reaction RNA(n) + a ribonucleoside 5'-triphosphate = RNA(n+1) + diphosphate. DNA-dependent RNA polymerase catalyzes the transcription of DNA into RNA using the four ribonucleoside triphosphates as substrates. This Psathyrostachys fragilis (Russian wild rye) protein is DNA-directed RNA polymerase subunit alpha.